Reading from the N-terminus, the 418-residue chain is Mitochondrial outer membrane protein SLC25A46 (418 aa).

Serine 32 and serine 35 each carry phosphoserine. Phosphothreonine is present on threonine 45. The interval 46 to 96 (PPDIPGSRNLHWGEKSPSYGVPSAPPTLEGPAEEPFPGGGDGPRPGRSSEQ) is disordered. The stretch at 96 to 187 (QLNRFAGFGI…GIISEFTPLP (92 aa)) is one Solcar 1 repeat. A run of 6 helical transmembrane segments spans residues 103–123 (FGIG…CIVL), 167–187 (FIVQ…TPLP), 202–222 (HLLL…ASLI), 258–278 (LLPL…HYII), 314–334 (FPEL…LYPL), and 382–402 (VFGF…HATI). The stretch at 311-416 (DAYFPELIAN…KIIYSTLLQN (106 aa)) is one Solcar 2 repeat.

The protein belongs to the mitochondrial carrier (TC 2.A.29) family. In terms of assembly, associates with the mitochondrial contact site and cristae organizing system (MICOS) complex. May associate with the endoplasmic reticulum membrane protein complex (EMC). As to expression, widely expressed. Highly expressed in hindbrain, spinal cord and brain coronal sections containing corpus callosum, fornix, optic chiasm, thalamus, hypothalamus, midbrain, pons and cerebellum.

The protein resides in the mitochondrion outer membrane. Transmembrane protein of the mitochondrial outer membrane that controls mitochondrial organization. May regulate the assembly of the MICOS (mitochondrial contact site and cristae organizing system) complex which is essential to the biogenesis and dynamics of mitochondrial cristae, the inwards folds of the inner mitochondrial membrane. Through its interaction with the EMC (endoplasmic reticulum membrane protein complex), could regulate mitochondrial lipid homeostasis and thereby mitochondrial fission. This chain is Mitochondrial outer membrane protein SLC25A46, found in Rattus norvegicus (Rat).